A 91-amino-acid chain; its full sequence is Acyl-CoA-binding domain-containing protein 1 (91 aa).

Residues 3-88 (LQEDFEQYAE…VKQLLEEAAA (86 aa)) enclose the ACB domain. An acyl-CoA is bound by residues Lys-15, 30–34 (YGLYK), Lys-56, and Tyr-75.

It belongs to the ACBP family. In terms of tissue distribution, highly expressed in leaves. Expressed at low levels in roots and seeds.

It is found in the cytoplasm. The protein localises to the cytosol. Binds medium- and long-chain acyl-CoA esters with high affinity. Can interact in vitro with palmitoyl-CoA, oleoyl-CoA, linoleoyl-CoA and linolenoyl-CoA. Binds phosphatidic acid (PA) and phosphatidylcholine (PC) in vitro. May play a role in the biosynthesis of phospholipids. The sequence is that of Acyl-CoA-binding domain-containing protein 1 from Oryza sativa subsp. japonica (Rice).